Here is a 343-residue protein sequence, read N- to C-terminus: MLSTEDFDFDLPEELIAQTPLKDRASSRLLVVNKETGDMEDKHFHDILDELQPGDALVMNNTRVLPARLYGEKPETGGHLEVLLLTNTEGDTWETLIKPAKRAKVGTEIQFGDGRLKAVVKEELEHGGRIIEFKYDGIFLEILESLGEMPLPPYIKERLDDPDRYQTVYAEENGSAAAPTAGLHFTKELLEEIKAKGVHLVYLTLHVGLGTFRPVSVDNIEEHHMHSEFYRLTEEAAKQLNEVRQAGGRIVAVGTTSIRTLETIGTKFNGEIQADSGWTDIFITPGYQFKVVEAFSTNFHLPKSTLVMLVSAFAGKDLTLAAYQHAIEEKYRFFSFGDAMFIK.

The protein belongs to the QueA family. Monomer.

It is found in the cytoplasm. The enzyme catalyses 7-aminomethyl-7-carbaguanosine(34) in tRNA + S-adenosyl-L-methionine = epoxyqueuosine(34) in tRNA + adenine + L-methionine + 2 H(+). Its pathway is tRNA modification; tRNA-queuosine biosynthesis. Its function is as follows. Transfers and isomerizes the ribose moiety from AdoMet to the 7-aminomethyl group of 7-deazaguanine (preQ1-tRNA) to give epoxyqueuosine (oQ-tRNA). This chain is S-adenosylmethionine:tRNA ribosyltransferase-isomerase, found in Enterococcus faecalis (strain ATCC 700802 / V583).